Reading from the N-terminus, the 203-residue chain is Proteasome subunit beta 2 (203 aa).

The propeptide at 1–9 is removed in mature form; by autocatalysis; it reads MGEEFQVGA. T10 serves as the catalytic Nucleophile.

It belongs to the peptidase T1B family. As to quaternary structure, the 20S proteasome core is composed of 14 alpha and 14 beta subunits that assemble into four stacked heptameric rings, resulting in a barrel-shaped structure. The two inner rings, each composed of seven catalytic beta subunits, are sandwiched by two outer rings, each composed of seven alpha subunits. The catalytic chamber with the active sites is on the inside of the barrel. Has a gated structure, the ends of the cylinder being occluded by the N-termini of the alpha-subunits. Is capped at one or both ends by the proteasome regulatory ATPase, PAN.

The protein resides in the cytoplasm. It carries out the reaction Cleavage of peptide bonds with very broad specificity.. With respect to regulation, the formation of the proteasomal ATPase PAN-20S proteasome complex, via the docking of the C-termini of PAN into the intersubunit pockets in the alpha-rings, triggers opening of the gate for substrate entry. Interconversion between the open-gate and close-gate conformations leads to a dynamic regulation of the 20S proteasome proteolysis activity. Component of the proteasome core, a large protease complex with broad specificity involved in protein degradation. This is Proteasome subunit beta 2 from Pyrobaculum neutrophilum (strain DSM 2338 / JCM 9278 / NBRC 100436 / V24Sta) (Thermoproteus neutrophilus).